Here is a 239-residue protein sequence, read N- to C-terminus: MVDKHIQAYKDYAKGMKYKDLAEKYGVSVNTIKSWKQRHGWQRKKGAPLKKGVHTKKVGAPLGNKNALGNNGGAPKGNQNAVTHGFFSKFLPEETLSIMEGIQERSPVDMIWDQIQIQYAAIIRAQKIMFVSDKQEMIKELKKKKSVLSETNEVEEEEFEFQFSWDRHATFLNAQSRAMAELRNLIKQFDELAHSEDERRLKLEHMRLNINKKKIEIEELTEEDKPFEITIVNKGDDSD.

This is an uncharacterized protein from Bacillus subtilis (strain 168).